We begin with the raw amino-acid sequence, 326 residues long: Transmembrane protein 255B (326 aa).

4 consecutive transmembrane segments (helical) span residues 26–46 (LWFV…GLAA), 55–75 (VGGY…IIGI), 85–105 (LVAA…CAIV), and 200–220 (AVLN…LGAF). Residues 284-326 (LASSEDLQPPSPSSSGSGLPGQAPPCYAPTYFPPGEKPPPYAP) form a disordered region. Residues 305 to 326 (QAPPCYAPTYFPPGEKPPPYAP) show a composition bias toward pro residues.

This sequence belongs to the TMEM255 family.

The protein localises to the membrane. The chain is Transmembrane protein 255B (TMEM255B) from Homo sapiens (Human).